A 226-amino-acid polypeptide reads, in one-letter code: Cytidylate kinase (226 aa).

Residue 11 to 19 participates in ATP binding; that stretch reads GPASAGKST.

It belongs to the cytidylate kinase family. Type 1 subfamily.

It is found in the cytoplasm. It carries out the reaction CMP + ATP = CDP + ADP. It catalyses the reaction dCMP + ATP = dCDP + ADP. The polypeptide is Cytidylate kinase (Limosilactobacillus fermentum (strain NBRC 3956 / LMG 18251) (Lactobacillus fermentum)).